Reading from the N-terminus, the 858-residue chain is Zinc finger protein ZXDC (858 aa).

3 disordered regions span residues M1–S73, D85–A108, and A142–A175. A compositionally biased stretch (pro residues) spans A59–E68. The segment covering A142–P152 has biased composition (low complexity). 10 C2H2-type zinc fingers span residues Y176–H200, F209–H233, F239–H263, F269–H291, Y298–H322, F329–H353, F359–H383, F389–H413, F419–H443, and S452–H477. Over residues D624–L634 the composition is skewed to polar residues. The disordered stretch occupies residues D624–S652. A compositionally biased stretch (low complexity) spans T635 to G651. Residue K661 forms a Glycyl lysine isopeptide (Lys-Gly) (interchain with G-Cter in SUMO) linkage. Disordered regions lie at residues D671–G714 and V727–G751. Residues G681 to E692 show a composition bias toward polar residues.

The protein belongs to the ZXD family. Self-associates. Interacts with ZXDB and CIITA. Sumoylated at Lys-661 with SUMO1, SUMO2 and SUMO3; sumoylation enhances the activity of the transcriptional activation domain.

It is found in the nucleus. Cooperates with CIITA to promote transcription of MHC class I and MHC class II genes. The polypeptide is Zinc finger protein ZXDC (Zxdc) (Mus musculus (Mouse)).